Reading from the N-terminus, the 440-residue chain is Tyrosine--tRNA ligase (440 aa).

Tyr46 serves as a coordination point for L-tyrosine. Residues Pro51 to Asn60 carry the 'HIGH' region motif. The L-tyrosine site is built by Tyr181 and Gln185. The 'KMSKS' region motif lies at Lys241–Ser245. Lys244 serves as a coordination point for ATP. Residues Asp373–Gly430 enclose the S4 RNA-binding domain.

The protein belongs to the class-I aminoacyl-tRNA synthetase family. TyrS type 1 subfamily. As to quaternary structure, homodimer.

The protein resides in the cytoplasm. It catalyses the reaction tRNA(Tyr) + L-tyrosine + ATP = L-tyrosyl-tRNA(Tyr) + AMP + diphosphate + H(+). Catalyzes the attachment of tyrosine to tRNA(Tyr) in a two-step reaction: tyrosine is first activated by ATP to form Tyr-AMP and then transferred to the acceptor end of tRNA(Tyr). This Bifidobacterium animalis subsp. lactis (strain AD011) protein is Tyrosine--tRNA ligase.